Consider the following 749-residue polypeptide: Transcription factor RFX3 (749 aa).

Positions 183–258 (HLQWLLDNYE…YHYYGIRVKP (76 aa)) form a DNA-binding region, RFX-type winged-helix. Positions 663–699 (VSPGNLDKDEGSEVESEMDEELDDSSEPQAKREKTEL) are disordered. Residues 674 to 688 (SEVESEMDEELDDSS) are compositionally biased toward acidic residues.

Belongs to the RFX family. As to quaternary structure, heterodimer; heterodimerizes with RFX1 and RFX2, and RFX6.

The protein localises to the nucleus. Functionally, transcription factor required for ciliogenesis and islet cell differentiation during endocrine pancreas development. Essential for the differentiation of nodal monocilia and left-right asymmetry specification during embryogenesis. Required for the biogenesis of motile cilia by governing growth and beating efficiency of motile cells. Also required for ciliated ependymal cell differentiation. Regulates the expression of genes involved in ciliary assembly (DYNC2LI1, FOXJ1 and BBS4) and genes involved in ciliary motility (DNAH11, DNAH9 and DNAH5). Together with RFX6, participates in the differentiation of 4 of the 5 islet cell types during endocrine pancreas development, with the exception of pancreatic PP (polypeptide-producing) cells. Regulates transcription by forming a heterodimer with another RFX protein and binding to the X-box in the promoter of target genes. Represses transcription of MAP1A in non-neuronal cells but not in neuronal cells. This is Transcription factor RFX3 (RFX3) from Macaca fascicularis (Crab-eating macaque).